The primary structure comprises 84 residues: Sulfur carrier protein TusA (84 aa).

C19 (cysteine persulfide intermediate) is an active-site residue.

It belongs to the sulfur carrier protein TusA family. Interacts with IscS.

It is found in the cytoplasm. It participates in tRNA modification. In terms of biological role, sulfur carrier protein involved in sulfur trafficking in the cell. Part of a sulfur-relay system required for 2-thiolation during synthesis of 2-thiouridine of the modified wobble base 5-methylaminomethyl-2-thiouridine (mnm(5)s(2)U) in tRNA. Interacts with IscS and stimulates its cysteine desulfurase activity. Accepts an activated sulfur from IscS, which is then transferred to TusD, and thus determines the direction of sulfur flow from IscS to 2-thiouridine formation. Also appears to be involved in sulfur transfer for the biosynthesis of molybdopterin. The sequence is that of Sulfur carrier protein TusA from Proteus mirabilis (strain HI4320).